Here is a 153-residue protein sequence, read N- to C-terminus: Endoribonuclease YbeY (153 aa).

3 residues coordinate Zn(2+): His-115, His-119, and His-125.

This sequence belongs to the endoribonuclease YbeY family. Requires Zn(2+) as cofactor.

The protein resides in the cytoplasm. Functionally, single strand-specific metallo-endoribonuclease involved in late-stage 70S ribosome quality control and in maturation of the 3' terminus of the 16S rRNA. The protein is Endoribonuclease YbeY of Blochmanniella floridana.